The primary structure comprises 676 residues: Urocanate hydratase (676 aa).

Positions 15-35 are disordered; the sequence is PLPENRGRQAGVPHAPVRTPS. NAD(+) is bound by residues 126–127, Gln204, 251–253, Glu271, 317–318, 343–347, 354–355, Tyr403, and Gly594; these read GG, GMS, NV, QTSCH, and YY.

The protein belongs to the urocanase family. The cofactor is NAD(+).

The catalysed reaction is 4-imidazolone-5-propanoate = trans-urocanate + H2O. It functions in the pathway amino-acid degradation; L-histidine degradation into L-glutamate; N-formimidoyl-L-glutamate from L-histidine: step 2/3. This is Urocanate hydratase (UROC1) from Homo sapiens (Human).